Reading from the N-terminus, the 106-residue chain is Large ribosomal subunit protein uL24 (106 aa).

Belongs to the universal ribosomal protein uL24 family. Part of the 50S ribosomal subunit.

Its function is as follows. One of two assembly initiator proteins, it binds directly to the 5'-end of the 23S rRNA, where it nucleates assembly of the 50S subunit. Functionally, one of the proteins that surrounds the polypeptide exit tunnel on the outside of the subunit. The sequence is that of Large ribosomal subunit protein uL24 from Blochmanniella pennsylvanica (strain BPEN).